Reading from the N-terminus, the 572-residue chain is Phospholipase B-like protein B (572 aa).

An N-terminal signal peptide occupies residues 1–28 (MNKLKSNFILNIVILFTILIFNINFINC). Asn73, Asn138, Asn219, Asn427, Asn544, and Asn564 each carry an N-linked (GlcNAc...) asparagine glycan.

This sequence belongs to the phospholipase B-like family.

The protein localises to the secreted. Its function is as follows. Probable phospholipase. This Dictyostelium discoideum (Social amoeba) protein is Phospholipase B-like protein B (plbB).